Consider the following 176-residue polypeptide: Ribosome maturation factor RimM (176 aa).

Residues 93–172 form the PRC barrel domain; that stretch reads KDEFFYFDII…KIQVKNSLDI (80 aa).

This sequence belongs to the RimM family. In terms of assembly, binds ribosomal protein uS19.

The protein localises to the cytoplasm. Its function is as follows. An accessory protein needed during the final step in the assembly of 30S ribosomal subunit, possibly for assembly of the head region. Essential for efficient processing of 16S rRNA. May be needed both before and after RbfA during the maturation of 16S rRNA. It has affinity for free ribosomal 30S subunits but not for 70S ribosomes. This is Ribosome maturation factor RimM from Campylobacter fetus subsp. fetus (strain 82-40).